Reading from the N-terminus, the 309-residue chain is Probable cell wall protein PGA50 (309 aa).

Residues 1–17 form the signal peptide; sequence MKLNLLLLLFIVELVAA. N-linked (GlcNAc...) asparagine glycosylation is found at Asn67, Asn115, Asn248, Asn267, and Asn277. The segment at 241–281 is disordered; it reads STTTFSSNGTSSGTTNGDTRAETKSSNSTQTSSSDKNSSQI. Ser286 carries the GPI-anchor amidated serine lipid modification. Residues 287–309 constitute a propeptide, removed in mature form; that stretch reads TGVANFVASFGMGTLLLFVLSLC.

This sequence belongs to the IHD1 family. The GPI-anchor is attached to the protein in the endoplasmic reticulum and serves to target the protein to the cell surface. There, the glucosamine-inositol phospholipid moiety is cleaved off and the GPI-modified mannoprotein is covalently attached via its lipidless GPI glycan remnant to the 1,6-beta-glucan of the outer cell wall layer.

It is found in the secreted. It localises to the cell wall. Its subcellular location is the membrane. Its function is as follows. Probable GPI-anchored cell wall protein that may be involved in cell wall organization, hyphal growth, as well as in virulence. The sequence is that of Probable cell wall protein PGA50 (PGA50) from Candida albicans (strain SC5314 / ATCC MYA-2876) (Yeast).